A 232-amino-acid chain; its full sequence is Ribonuclease 3 (232 aa).

Residues 5–134 (NDAISKIIDY…LIGAIYIDGG (130 aa)) form the RNase III domain. Glu-47 provides a ligand contact to Mg(2+). Residue Asp-51 is part of the active site. Positions 120 and 123 each coordinate Mg(2+). Residue Glu-123 is part of the active site. Residues 159-228 (DPKTSLQEWT…AELMLEKIGK (70 aa)) form the DRBM domain.

Belongs to the ribonuclease III family. As to quaternary structure, homodimer. Mg(2+) serves as cofactor.

The protein resides in the cytoplasm. The enzyme catalyses Endonucleolytic cleavage to 5'-phosphomonoester.. Functionally, digests double-stranded RNA. Involved in the processing of primary rRNA transcript to yield the immediate precursors to the large and small rRNAs (23S and 16S). Processes some mRNAs, and tRNAs when they are encoded in the rRNA operon. Processes pre-crRNA and tracrRNA of type II CRISPR loci if present in the organism. The sequence is that of Ribonuclease 3 from Wolbachia pipientis wMel.